We begin with the raw amino-acid sequence, 97 residues long: Putative pterin-4-alpha-carbinolamine dehydratase (97 aa).

It belongs to the pterin-4-alpha-carbinolamine dehydratase family.

The catalysed reaction is (4aS,6R)-4a-hydroxy-L-erythro-5,6,7,8-tetrahydrobiopterin = (6R)-L-erythro-6,7-dihydrobiopterin + H2O. The chain is Putative pterin-4-alpha-carbinolamine dehydratase from Ruegeria pomeroyi (strain ATCC 700808 / DSM 15171 / DSS-3) (Silicibacter pomeroyi).